Consider the following 448-residue polypeptide: Divalent metal cation transporter MntH (448 aa).

11 consecutive transmembrane segments (helical) span residues 41–61 (LFAFMGPGALIAVGYVDPGNW), 69–89 (SEFGYTLLSVILISNILAVLL), 117–137 (GFVLWILAELAIIATDIAEVI), 147–167 (FGIPLIWGVCITALDIFLVLF), 176–196 (IEVIVITLMVTILVCFGAEMV), 215–235 (IVTNPAMLYIALGILGATVMP), 270–290 (FSLTIALLINASILILAAAAF), 307–327 (LLNPTLGSSIASTVFAVALLA), 363–383 (VLAIVPAVIITALYGANGINE), 384–404 (LLIFSQVILSMQLSFAVIPLV), and 424–444 (IVSWSVAIFIAFLNIYLLFYT).

It belongs to the NRAMP family.

It is found in the cell membrane. In terms of biological role, h(+)-stimulated, divalent metal cation uptake system. The sequence is that of Divalent metal cation transporter MntH from Listeria innocua serovar 6a (strain ATCC BAA-680 / CLIP 11262).